The chain runs to 234 residues: 2,3,4,5-tetrahydropyridine-2,6-dicarboxylate N-acetyltransferase (234 aa).

This sequence belongs to the transferase hexapeptide repeat family. DapH subfamily.

It carries out the reaction (S)-2,3,4,5-tetrahydrodipicolinate + acetyl-CoA + H2O = L-2-acetamido-6-oxoheptanedioate + CoA. It functions in the pathway amino-acid biosynthesis; L-lysine biosynthesis via DAP pathway; LL-2,6-diaminopimelate from (S)-tetrahydrodipicolinate (acetylase route): step 1/3. In terms of biological role, catalyzes the transfer of an acetyl group from acetyl-CoA to tetrahydrodipicolinate. This is 2,3,4,5-tetrahydropyridine-2,6-dicarboxylate N-acetyltransferase from Ligilactobacillus salivarius (strain UCC118) (Lactobacillus salivarius).